We begin with the raw amino-acid sequence, 551 residues long: E3 SUMO-protein ligase CBX4 (551 aa).

Residues 11–69 (FAVESIEKKRIRKGRVEYLVKWRGWSPKYNTWEPEENILDPRLLIAFQNRERQEQLMGY) enclose the Chromo domain. Residues K77, K106, K114, and K125 each participate in a glycyl lysine isopeptide (Lys-Gly) (interchain with G-Cter in SUMO2) cross-link. Positions 125-152 (KKHHQYQPHSKERSGKPPPPGKSGKYYY) are disordered. At K149 the chain carries N6-acetyllysine; alternate. Residue K149 forms a Glycyl lysine isopeptide (Lys-Gly) (interchain with G-Cter in SUMO2); alternate linkage. Glycyl lysine isopeptide (Lys-Gly) (interchain with G-Cter in SUMO2) cross-links involve residues K157, K167, and K178. Residues 172–193 (QYQGGHKEAPSPTCPDLGTKSH) are disordered. S182 bears the Phosphoserine mark. Residues K191, K205, K212, K223, K249, K268, K278, and K280 each participate in a glycyl lysine isopeptide (Lys-Gly) (interchain with G-Cter in SUMO2) cross-link. Positions 216 to 244 (GGAGAPGKGSEKGPPNGMTPAPKEAVTGN) are disordered. Basic and acidic residues-rich tracts occupy residues 281–291 (SGEAAEGEARS), 298–310 (AAEE…DRTF), and 317–332 (SEEK…REEE). Disordered stretches follow at residues 281–399 (SGEA…TVGL) and 430–451 (TPTC…PTAA). Residues K321, K353, and K366 each participate in a glycyl lysine isopeptide (Lys-Gly) (interchain with G-Cter in SUMO2) cross-link. Positions 381 to 396 (PAHHHHHHHHHHHHHT) are enriched in basic residues. The residue at position 463 (S463) is a Phosphoserine. A Glycyl lysine isopeptide (Lys-Gly) (interchain with G-Cter in SUMO2); alternate cross-link involves residue K490. Residue K490 forms a Glycyl lysine isopeptide (Lys-Gly) (interchain with G-Cter in SUMO); alternate linkage.

In terms of assembly, interacts with SUV39H1 and HIPK2. Interacts with CSNK2B. Component of a PRC1-like complex. The composition of the PRC1 complex differs between the PRC1 complex in pluripotent embryonic stem cells containing RNF2, CBX7 and PCGF2, and the PRC1 complex in differentiating cells containing RNF2, CBX2, CBX4 and BMI1. Interacts with RNF2. Interacts (via chromodomain) with histone H3K9Me3 and single-stranded RNA (ssRNA). Interacts with CHTOP. May interact with H3C15 and H3C1. Interacts with PRDM1. Ubiquitinated. Ubiquitination regulates the function of the Polycomb group (PcG) multiprotein PRC1-like complex. Deubiquitinated by USP26. As to expression, expressed in embryoid bodies.

Its subcellular location is the nucleus. It localises to the nucleus speckle. The protein operates within protein modification; protein sumoylation. E3 SUMO-protein ligase that catalyzes sumoylation of target proteins by promoting the transfer of SUMO from the E2 enzyme to the substrate. Involved in the sumoylation of HNRNPK, a p53/TP53 transcriptional coactivator, hence indirectly regulates p53/TP53 transcriptional activation resulting in p21/CDKN1A expression. Its function is as follows. Component of a Polycomb group (PcG) multiprotein PRC1-like complex, a complex class required to maintain the transcriptionally repressive state of many genes, including Hox genes, throughout development. PcG PRC1 complex acts via chromatin remodeling and modification of histones; it mediates monoubiquitination of histone H2A 'Lys-119', rendering chromatin heritably changed in its expressibility. Binds to histone H3 trimethylated at 'Lys-9' (H3K9me3). Plays a role in the lineage differentiation of the germ layers in embryonic development. This chain is E3 SUMO-protein ligase CBX4 (Cbx4), found in Mus musculus (Mouse).